Consider the following 209-residue polypeptide: Endoplasmic reticulum vesicle protein 25 (209 aa).

Positions 1 to 18 (MKYTTFGIISLFLSVTWA) are cleaved as a signal peptide. Residues 19–178 (LRFELAASFE…TNESTNRRVR (160 aa)) lie on the Lumenal side of the membrane. A GOLD domain is found at 31–119 (PFCIRDFVEA…MRNVEVNIES (89 aa)). Residues 179 to 199 (NFSMAVIVVFAALCAWQLNYL) form a helical membrane-spanning segment. The Cytoplasmic portion of the chain corresponds to 200–209 (KNYFRAKHII).

This sequence belongs to the EMP24/GP25L family.

Its subcellular location is the endoplasmic reticulum membrane. The protein localises to the golgi apparatus membrane. Constituent of COPII-coated endoplasmic reticulum-derived transport vesicles. Required for efficient transport of a subset of secretory proteins to the Golgi. Facilitates retrograde transport from the Golgi to the endoplasmic reticulum. The polypeptide is Endoplasmic reticulum vesicle protein 25 (ERV25) (Eremothecium gossypii (strain ATCC 10895 / CBS 109.51 / FGSC 9923 / NRRL Y-1056) (Yeast)).